A 511-amino-acid polypeptide reads, in one-letter code: Histidine ammonia-lyase (511 aa).

The 5-imidazolinone (Ala-Gly) cross-link spans 143-145 (ASG). At Ser144 the chain carries 2,3-didehydroalanine (Ser).

Belongs to the PAL/histidase family. Contains an active site 4-methylidene-imidazol-5-one (MIO), which is formed autocatalytically by cyclization and dehydration of residues Ala-Ser-Gly.

The protein resides in the cytoplasm. The catalysed reaction is L-histidine = trans-urocanate + NH4(+). Its pathway is amino-acid degradation; L-histidine degradation into L-glutamate; N-formimidoyl-L-glutamate from L-histidine: step 1/3. In Vibrio parahaemolyticus serotype O3:K6 (strain RIMD 2210633), this protein is Histidine ammonia-lyase.